Consider the following 329-residue polypeptide: MNKKTIAMLGAGSWGTAVAIHLAKIGHKTLLWSHNPQHVALMAEQHSNPAYLPGIPFPENLIPSDDLIECVQSADYVIIAVPSHAFAEITNKIPKPTQGLAWLTKGVDPASHQLLSQLVASRFGVDFPIAVISGPSFAKEVARFLPTALTLASNNTNYQKKMHQLFHHDNIRVYLSDDLIGVQLCGAVKNILAIACGISDGLGYGANAKAALITRGLAEMTRLGLSMGARQDTFLGLAGVGDLVLTCTDDQSRNRRFGLLLGREVPIPEAEHQIGQVVEGKHNAAQICAIANKNKVEMPICEQINALLHGIVHAQEAVNNLMSRPAKEE.

NADPH-binding residues include Ser-13, Trp-14, His-34, and Lys-105. Sn-glycerol 3-phosphate contacts are provided by Lys-105, Gly-134, and Ser-136. Ala-138 is an NADPH binding site. Residues Lys-189, Asp-242, Ser-252, Arg-253, and Asn-254 each coordinate sn-glycerol 3-phosphate. Lys-189 (proton acceptor) is an active-site residue. An NADPH-binding site is contributed by Arg-253. 2 residues coordinate NADPH: Val-277 and Glu-279.

The protein belongs to the NAD-dependent glycerol-3-phosphate dehydrogenase family.

The protein resides in the cytoplasm. It carries out the reaction sn-glycerol 3-phosphate + NAD(+) = dihydroxyacetone phosphate + NADH + H(+). The catalysed reaction is sn-glycerol 3-phosphate + NADP(+) = dihydroxyacetone phosphate + NADPH + H(+). The protein operates within membrane lipid metabolism; glycerophospholipid metabolism. In terms of biological role, catalyzes the reduction of the glycolytic intermediate dihydroxyacetone phosphate (DHAP) to sn-glycerol 3-phosphate (G3P), the key precursor for phospholipid synthesis. In Legionella pneumophila (strain Corby), this protein is Glycerol-3-phosphate dehydrogenase [NAD(P)+].